The following is a 93-amino-acid chain: Protein NONRESPONDING TO OXYLIPINS 2, mitochondrial (93 aa).

The transit peptide at Met1–Pro27 directs the protein to the mitochondrion.

Expressed in cotyledons, roots and flowers.

Its subcellular location is the mitochondrion. Essential for mitochondrial morphology, functionality and distribution. Contributes to 9-lipoxygenase (9-LOX)-derived oxylipin synthesis, but not to brassinosteroids (BRs) signaling. Required for waving-inducing oxylipin 9-hydroxyoctadecatrienoic acid and derivatives (e.g. 9-HOT, 2-HOE, 13-HOT, 13-HOD, 13-KOD, 12,13-KHOD, 9-HOT, 9-HOD, 9-KOT, 9-KOD and 9,10-KHOE)-mediated root development regulation, including callose deposition, root waving and lateral roots formation. Involved in basal plant defense toward pathogenic bacteria (e.g. Pseudomonas syringae pv tomato), both in compatible (e.g. Pst DC3000) and incompatible (e.g. Pst DC3000 avrRPM1) interactions, as well as against obligate biotrophic pathogenic fungi (e.g. Golovinomyces cichoracearum), probably via the promotion of callose deposition in the cell wall. Confers sensitivity to the herbicide isoxaben, a herbicide inhibiting cellulose synthesis and altering the cell wall. In Arabidopsis thaliana (Mouse-ear cress), this protein is Protein NONRESPONDING TO OXYLIPINS 2, mitochondrial.